The following is a 212-amino-acid chain: Large ribosomal subunit protein uL1 (212 aa).

It belongs to the universal ribosomal protein uL1 family. In terms of assembly, part of the 50S ribosomal subunit.

Its function is as follows. Binds directly to 23S rRNA. Probably involved in E site tRNA release. Protein L1 is also a translational repressor protein, it controls the translation of its operon by binding to its mRNA. The chain is Large ribosomal subunit protein uL1 from Methanobrevibacter smithii (strain ATCC 35061 / DSM 861 / OCM 144 / PS).